The sequence spans 233 residues: H-2 class II histocompatibility antigen, A-F alpha chain (233 aa).

An alpha-1 region spans residues Glu1–Asn88. Residues Glu1–Glu195 are Extracellular-facing. The tract at residues Glu89–Trp182 is alpha-2. The region spanning Pro91–Glu183 is the Ig-like C1-type domain. Cys111 and Cys167 are disulfide-bonded. N-linked (GlcNAc...) asparagine glycosylation occurs at Asn122. The tract at residues Glu183–Glu195 is connecting peptide. Residues Thr196 to Leu221 form a helical membrane-spanning segment. The Cytoplasmic portion of the chain corresponds to Arg222–Leu233.

It belongs to the MHC class II family.

The protein localises to the membrane. The sequence is that of H-2 class II histocompatibility antigen, A-F alpha chain (H2-Aa) from Mus musculus (Mouse).